Here is a 296-residue protein sequence, read N- to C-terminus: Homoserine kinase (296 aa).

Position 84–94 (84–94 (PLARGLGSSSS)) interacts with ATP.

The protein belongs to the GHMP kinase family. Homoserine kinase subfamily.

It localises to the cytoplasm. It catalyses the reaction L-homoserine + ATP = O-phospho-L-homoserine + ADP + H(+). Its pathway is amino-acid biosynthesis; L-threonine biosynthesis; L-threonine from L-aspartate: step 4/5. Functionally, catalyzes the ATP-dependent phosphorylation of L-homoserine to L-homoserine phosphate. This Lactococcus lactis subsp. cremoris (strain SK11) protein is Homoserine kinase.